Reading from the N-terminus, the 146-residue chain is Hemoglobin subunit beta (146 aa).

Val-1 is modified (N-acetylvaline). Residues 2 to 146 form the Globin domain; that stretch reads HLTADEKAAV…VANALAHKYH (145 aa). Thr-12 is modified (phosphothreonine). Phosphoserine is present on Ser-44. Lys-59 is modified (N6-acetyllysine). His-63 is a heme b binding site. Lys-82 is subject to N6-acetyllysine. A heme b-binding site is contributed by His-92. An S-nitrosocysteine modification is found at Cys-93. Lys-144 carries the post-translational modification N6-acetyllysine.

This sequence belongs to the globin family. Heterotetramer of two alpha chains and two beta chains. In terms of tissue distribution, red blood cells.

In terms of biological role, involved in oxygen transport from the lung to the various peripheral tissues. The protein is Hemoglobin subunit beta (HBB) of Odobenus rosmarus divergens (Pacific walrus).